We begin with the raw amino-acid sequence, 145 residues long: Transcription antitermination protein NusB (145 aa).

This sequence belongs to the NusB family.

Its function is as follows. Involved in transcription antitermination. Required for transcription of ribosomal RNA (rRNA) genes. Binds specifically to the boxA antiterminator sequence of the ribosomal RNA (rrn) operons. The polypeptide is Transcription antitermination protein NusB (Thiobacillus denitrificans (strain ATCC 25259 / T1)).